The sequence spans 411 residues: Phospholipase ABHD3 (411 aa).

A helical; Signal-anchor for type II membrane protein transmembrane segment spans residues 25–45; the sequence is VGFFGSGVGFSLILGFSVAYA. Positions 140–247 constitute an AB hydrolase-1 domain; sequence PTVLLLPGLT…PLKAAATFSV (108 aa). Active-site charge relay system residues include serine 220, aspartate 346, and histidine 375.

The protein belongs to the AB hydrolase superfamily. AB hydrolase 4 family.

It is found in the membrane. It carries out the reaction a 1,2-diacyl-sn-glycero-3-phosphocholine + H2O = a 1-acyl-sn-glycero-3-phosphocholine + a fatty acid + H(+). The enzyme catalyses a 1,2-diacyl-sn-glycero-3-phosphocholine + H2O = a 2-acyl-sn-glycero-3-phosphocholine + a fatty acid + H(+). It catalyses the reaction 1-tetradecanoyl-2-(9Z,12Z-octadecadienoyl)-sn-glycero-3-phosphocholine + H2O = 2-(9Z,12Z-octadecadienoyl)-sn-glycero-3-phosphocholine + tetradecanoate + H(+). The catalysed reaction is 1-tetradecanoyl-2-(9Z,12Z-octadecadienoyl)-sn-glycero-3-phosphocholine + H2O = 1-tetradecanoyl-sn-glycero-3-phosphocholine + (9Z,12Z)-octadecadienoate + H(+). It carries out the reaction 1-tetradecanoyl-2-(5Z,8Z,11Z,14Z-eicosatetraenoyl)-sn-glycero-3-phosphocholine + H2O = 2-(5Z,8Z,11Z,14Z)-eicosatetraenoyl-sn-glycero-3-phosphocholine + tetradecanoate + H(+). The enzyme catalyses 1-tetradecanoyl-2-(4Z,7Z,10Z,13Z,16Z,19Z-docosahexaenoyl)-sn-glycero-3-phosphocholine + H2O = 2-(4Z,7Z,10Z,13Z,16Z,19Z-docosahexaenoyl)-sn-glycero-3-phosphocholine + tetradecanoate + H(+). It catalyses the reaction 1,2-ditetradecanoyl-sn-glycero-3-phosphocholine + H2O = 2-tetradecanoyl-sn-glycero-3-phosphocholine + tetradecanoate + H(+). The catalysed reaction is 1-octadecanoyl-2-acetyl-sn-glycero-3-phosphocholine + H2O = 1-octadecanoyl-sn-glycero-3-phosphocholine + acetate + H(+). It carries out the reaction 1,2-ditetradecanoyl-sn-glycero-3-phosphocholine + H2O = 1-tetradecanoyl-sn-glycero-3-phosphocholine + tetradecanoate + H(+). The enzyme catalyses 1-octadecanoyl-2-pentanoyl-sn-glycero-3-phosphocholine + H2O = pentanoate + 1-octadecanoyl-sn-glycero-3-phosphocholine + H(+). It catalyses the reaction 1-octadecanoyl-2-hexanoyl-sn-glycero-3-phosphocholine + H2O = hexanoate + 1-octadecanoyl-sn-glycero-3-phosphocholine + H(+). The catalysed reaction is 1-octadecanoyl-2-octanoyl-sn-glycero-3-phosphocholine + H2O = 1-octadecanoyl-sn-glycero-3-phosphocholine + octanoate + H(+). It carries out the reaction 1-octadecanoyl-2-nonanoyl-sn-glycero-3-phosphocholine + H2O = nonanoate + 1-octadecanoyl-sn-glycero-3-phosphocholine + H(+). The enzyme catalyses 1-O-hexadecyl-2-nonadioyl-sn-glycero-3-phosphocholine + H2O = nonanedioate + 1-O-hexadecyl-sn-glycero-3-phosphocholine + H(+). It catalyses the reaction 1-hexadecanoyl-2-nonadioyl-sn-glycero-3-phosphocholine + H2O = nonanedioate + 1-hexadecanoyl-sn-glycero-3-phosphocholine + H(+). The catalysed reaction is 1-hexadecanoyl-2-(9-oxononanoyl)-sn-glycero-3-phosphocholine + H2O = 9-oxononanoate + 1-hexadecanoyl-sn-glycero-3-phosphocholine + H(+). It carries out the reaction 1-hexadecanoyl-2-(5-oxopentanoyl)-sn-glycero-3-phosphocholine + H2O = 5-oxopentanoate + 1-hexadecanoyl-sn-glycero-3-phosphocholine + H(+). The enzyme catalyses 1-hexadecanoyl-2-glutaroyl-sn-glycero-3-phosphocholine + H2O = glutarate + 1-hexadecanoyl-sn-glycero-3-phosphocholine + H(+). It catalyses the reaction 1-O-hexadecyl-2-acetyl-sn-glycero-3-phosphocholine + H2O = 1-O-hexadecyl-sn-glycero-3-phosphocholine + acetate + H(+). Functionally, phospholipase that may play a role in phospholipids remodeling. May selectively cleave myristate (C14)-containing phosphatidylcholines through its predominant phospholipase 1 activity, cleaving preferentially acyl groups in sn1 position. In parallel, may have a minor phospholipase 2 activity acting on acyl groups in position sn2. In addition to (C14)-containing phosphatidylcholines, may also act on other medium-chain-containing and oxidatively truncated phospholipids. The protein is Phospholipase ABHD3 of Bos taurus (Bovine).